Here is a 102-residue protein sequence, read N- to C-terminus: ATP-dependent Clp protease adapter protein ClpS (102 aa).

The protein belongs to the ClpS family. As to quaternary structure, binds to the N-terminal domain of the chaperone ClpA.

In terms of biological role, involved in the modulation of the specificity of the ClpAP-mediated ATP-dependent protein degradation. In Shewanella denitrificans (strain OS217 / ATCC BAA-1090 / DSM 15013), this protein is ATP-dependent Clp protease adapter protein ClpS.